The following is a 420-amino-acid chain: Glyceraldehyde-3-phosphate dehydrogenase GAPCP2, chloroplastic (420 aa).

A chloroplast-targeting transit peptide spans 1–66 (MALSSLLRSA…YNAKRVQPIK (66 aa)). Residues 94 to 95 (RI), aspartate 116, and arginine 162 contribute to the NAD(+) site. D-glyceraldehyde 3-phosphate is bound by residues 233 to 235 (SCT), threonine 264, 293 to 294 (TG), and arginine 316. Cysteine 234 (nucleophile) is an active-site residue. Asparagine 398 contacts NAD(+).

It belongs to the glyceraldehyde-3-phosphate dehydrogenase family. Homotetramer. Expressed in shoot and root vasculature, leaf veins and vascular tissue of flowers and siliques.

It localises to the plastid. The protein localises to the chloroplast stroma. It catalyses the reaction D-glyceraldehyde 3-phosphate + phosphate + NAD(+) = (2R)-3-phospho-glyceroyl phosphate + NADH + H(+). Involved in plastidial glycolytic pathway and plays a specific role in glycolytic energy production in non-green plastids and chloroplasts. Essential for breakdown of starch to form sucrose for export to non-photosynthetic tissues, and to generate primary metabolites for anabolic pathways such as fatty acid and amino acid synthesis. Plays an important role in plant development by providing substrates for the phosphorylated pathway of serine biosynthesis in roots. Plays a crucial role in pollen development. Functionally redundant with GAPCP1. This Arabidopsis thaliana (Mouse-ear cress) protein is Glyceraldehyde-3-phosphate dehydrogenase GAPCP2, chloroplastic (GAPCP2).